A 735-amino-acid chain; its full sequence is Ribosomal protein S6 kinase alpha-1 (735 aa).

Serine 54 is modified (phosphoserine). Residues 62–321 (FELLKVLGQG…AEEIKRHIFY (260 aa)) form the Protein kinase 1 domain. ATP is bound by residues 68-76 (LGQGSFGKV) and lysine 94. Catalysis depends on aspartate 187, which acts as the Proton acceptor. Serine 221 bears the Phosphoserine; by PDPK1 mark. Serine 307 is subject to Phosphoserine. Positions 322–391 (STIDWNKLYR…VATGLMEDDS (70 aa)) constitute an AGC-kinase C-terminal domain. Threonine 359 is subject to Phosphothreonine. Residue serine 363 is modified to Phosphoserine. Phosphoserine; by autocatalysis occurs at positions 369 and 380. The 258-residue stretch at 418–675 (YIVKETIGVG…AKQVLQHPWI (258 aa)) folds into the Protein kinase 2 domain. ATP-binding positions include 424–432 (IGVGSYSVC) and lysine 447. Aspartate 535 serves as the catalytic Proton acceptor. Phosphothreonine is present on threonine 573. Serine 732 carries the post-translational modification Phosphoserine.

This sequence belongs to the protein kinase superfamily. AGC Ser/Thr protein kinase family. S6 kinase subfamily. Forms a complex with either MAPK1/ERK2 or MAPK3/ERK1 in quiescent cells. Transiently dissociates following mitogenic stimulation. Interacts with ETV1/ER81 and FGFR1. Mg(2+) is required as a cofactor. Post-translationally, activated by phosphorylation at Ser-221 by PDPK1. Autophosphorylated on Ser-380, as part of the activation process. May be phosphorylated at Thr-359 and Ser-363 by MAPK1/ERK2 and MAPK3/ERK1. N-terminal myristoylation results in an activated kinase in the absence of added growth factors.

It is found in the nucleus. It localises to the cytoplasm. The enzyme catalyses L-seryl-[protein] + ATP = O-phospho-L-seryl-[protein] + ADP + H(+). It catalyses the reaction L-threonyl-[protein] + ATP = O-phospho-L-threonyl-[protein] + ADP + H(+). With respect to regulation, upon extracellular signal or mitogen stimulation, phosphorylated at Thr-573 in the C-terminal kinase domain (CTKD) by MAPK1/ERK2 and MAPK3/ERK1. The activated CTKD then autophosphorylates Ser-380, allowing binding of PDPK1, which in turn phosphorylates Ser-221 in the N-terminal kinase domain (NTDK) leading to the full activation of the protein and subsequent phosphorylation of the substrates by the NTKD. Functionally, serine/threonine-protein kinase that acts downstream of ERK (MAPK1/ERK2 and MAPK3/ERK1) signaling and mediates mitogenic and stress-induced activation of the transcription factors CREB1, ETV1/ER81 and NR4A1/NUR77, regulates translation through RPS6 and EIF4B phosphorylation, and mediates cellular proliferation, survival, and differentiation by modulating mTOR signaling and repressing pro-apoptotic function of BAD and DAPK1. In fibroblast, is required for EGF-stimulated phosphorylation of CREB1, which results in the subsequent transcriptional activation of several immediate-early genes. In response to mitogenic stimulation (EGF and PMA), phosphorylates and activates NR4A1/NUR77 and ETV1/ER81 transcription factors and the cofactor CREBBP. Upon insulin-derived signal, acts indirectly on the transcription regulation of several genes by phosphorylating GSK3B at 'Ser-9' and inhibiting its activity. Phosphorylates RPS6 in response to serum or EGF via an mTOR-independent mechanism and promotes translation initiation by facilitating assembly of the pre-initiation complex. In response to insulin, phosphorylates EIF4B, enhancing EIF4B affinity for the EIF3 complex and stimulating cap-dependent translation. Is involved in the mTOR nutrient-sensing pathway by directly phosphorylating TSC2 at 'Ser-1798', which potently inhibits TSC2 ability to suppress mTOR signaling, and mediates phosphorylation of RPTOR, which regulates mTORC1 activity and may promote rapamycin-sensitive signaling independently of the PI3K/AKT pathway. Also involved in feedback regulation of mTORC1 and mTORC2 by phosphorylating DEPTOR. Mediates cell survival by phosphorylating the pro-apoptotic proteins BAD and DAPK1 and suppressing their pro-apoptotic function. Promotes the survival of hepatic stellate cells by phosphorylating CEBPB in response to the hepatotoxin carbon tetrachloride (CCl4). Mediates induction of hepatocyte prolifration by TGFA through phosphorylation of CEBPB. Is involved in cell cycle regulation by phosphorylating the CDK inhibitor CDKN1B, which promotes CDKN1B association with 14-3-3 proteins and prevents its translocation to the nucleus and inhibition of G1 progression. Phosphorylates EPHA2 at 'Ser-897', the RPS6KA-EPHA2 signaling pathway controls cell migration. In response to mTORC1 activation, phosphorylates EIF4B at 'Ser-406' and 'Ser-422' which stimulates bicarbonate cotransporter SLC4A7 mRNA translation, increasing SLC4A7 protein abundance and function. This is Ribosomal protein S6 kinase alpha-1 (Rps6ka1) from Rattus norvegicus (Rat).